A 501-amino-acid polypeptide reads, in one-letter code: Symplectin (501 aa).

The CN hydrolase domain maps to proline 20 to proline 287. Glutamate 60 acts as the Proton acceptor in catalysis. Lysine 163 functions as the Proton donor in the catalytic mechanism. Cysteine 196 functions as the Nucleophile in the catalytic mechanism. Cysteine 390 bears the S-(coelenterazin-3a-yl)cysteine mark.

This sequence belongs to the carbon-nitrogen hydrolase superfamily. BTD/VNN family. In terms of tissue distribution, photogenic gland (at protein level).

Monovalent ion-dependent bioluminescence photoprotein. Displays an emission peak at 470 nm (blue light). Trace amounts of monovalent ion trigger the intramolecular oxidation of the chromophore, didehydrocoelenterazine, with the emission of light. The chain is Symplectin from Sthenoteuthis oualaniensis (Purpleback flying squid).